The following is a 214-amino-acid chain: Thymidylate kinase (214 aa).

10 to 17 contributes to the ATP binding site; it reads GGEGVGKT.

The protein belongs to the thymidylate kinase family.

It carries out the reaction dTMP + ATP = dTDP + ADP. Its function is as follows. Phosphorylation of dTMP to form dTDP in both de novo and salvage pathways of dTTP synthesis. This chain is Thymidylate kinase, found in Bartonella quintana (strain Toulouse) (Rochalimaea quintana).